Reading from the N-terminus, the 776-residue chain is MLARAERPRPGPRPPPVFPFPPPLSLLLLLAILSAPVCGRVPRSVPRTSLPISEADSYLTRFAASHTYNYSALLVDPASHTLYVGARDSIFALTLPFSGERPRRIDWMVPETHRQNCRKKGKKEDECHNFIQILAIVNASHLLTCGTFAFDPKCGVIDVSSFQQVERLESGRGKCPFEPAQRSAAVMAGGVLYTATVKNFLGTEPIISRAVGRAEDWIRTETLSSWLNAPAFVAAMVLSPAEWGDEDGDDEIFFFFTETSRVLDSYERIKVPRVARVCAGDLGGRKTLQQRWTTFLKADLLCPGPEHGRASGVLQAMAELRPQPGAGTPIFYGIFSSQWEGAAISAVCAFRPQDIRAVLNGPFRELKHDCNRGLPVMDNEVPQPRPGECIANNMKLQQFGSSLSLPDRVLTFIRDHPLMDRPVFPADGRPLLVTTDTAYLRVVAHRVTSLSGKEYDVLYLGTEDGHLHRAVRIGAQLSVLEDLALFPEPQPVESMKLYHDWLLVGSHTEVTQVNTSNCGRLQSCSECILAQDPVCAWSFRLDACVAHAGEHRGMVQDIESADVSSLCPKEPGEHPVVFEVPVATVGHVVLPCSPSSAWASCVWHQPSGVTALTPRRDGLEVVVTPGAMGAYACECQEGGAARVVAAYSLVWGSQRGPSNRAHTVVGAGLVGFLLGVLAASLTLLLIGRRQQRRRQRELLARDKVGLDLGAPPSGTTSYSQDPPSPSPEDERLPLALGKRGSGFGGFPPPFLLDSCPSPAHIRLTGAPLATCDETSI.

An N-terminal signal peptide occupies residues 1 to 39 (MLARAERPRPGPRPPPVFPFPPPLSLLLLLAILSAPVCG). Residues 40–665 (RVPRSVPRTS…GPSNRAHTVV (626 aa)) are Extracellular-facing. The 469-residue stretch at 47–515 (RTSLPISEAD…SHTEVTQVNT (469 aa)) folds into the Sema domain. Residue asparagine 69 is glycosylated (N-linked (GlcNAc...) asparagine). A disulfide bridge connects residues cysteine 117 and cysteine 127. Residue asparagine 138 is glycosylated (N-linked (GlcNAc...) asparagine). Cystine bridges form between cysteine 145–cysteine 154, cysteine 278–cysteine 389, and cysteine 302–cysteine 348. An N-linked (GlcNAc...) asparagine glycan is attached at asparagine 514. The PSI domain occupies 517-568 (NCGRLQSCSECILAQDPVCAWSFRLDACVAHAGEHRGMVQDIESADVSSLCP). 3 disulfides stabilise this stretch: cysteine 518-cysteine 535, cysteine 527-cysteine 544, and cysteine 592-cysteine 633. In terms of domain architecture, Ig-like C2-type spans 585-640 (VGHVVLPCSPSSAWASCVWHQPSGVTALTPRRDGLEVVVTPGAMGAYACECQEGGA). Residues 666-686 (GAGLVGFLLGVLAASLTLLLI) form a helical membrane-spanning segment. Over 687–776 (GRRQQRRRQR…PLATCDETSI (90 aa)) the chain is Cytoplasmic. Residues 702-741 (DKVGLDLGAPPSGTTSYSQDPPSPSPEDERLPLALGKRGS) form a disordered region. Phosphoserine is present on residues serine 724 and serine 726. The PDZ-binding motif lies at 774–776 (TSI).

This sequence belongs to the semaphorin family. As to quaternary structure, interacts (via PDZ-binding motif) with DLG4/SAP90 (via PDZ domain 2); this interaction may promote translocation of DLG4/SAP90 to the membrane. As to expression, expressed at low levels in the developing embryo. Expressed at high levels in the lung and adult central nervous system, including the dorsal root ganglia.

It localises to the cell membrane. Its subcellular location is the postsynaptic density. It is found in the perikaryon. The protein resides in the cell projection. The protein localises to the dendrite. Functionally, probable cell surface receptor that regulates oligodendroglial precursor cell migration. Might also regulate differentiation of oligodendroglial precursor cells. Has growth cone collapse activity against retinal ganglion-cell axons. The chain is Semaphorin-4F (Sema4f) from Rattus norvegicus (Rat).